The primary structure comprises 563 residues: Inorganic phosphate transporter PT2 (563 aa).

Disordered regions lie at residues 1-51 (MAPR…SGEE) and 67-96 (DGGA…PAYS). Topologically, residues 1–127 (MAPRYHSAAE…NGEKQSLLVP (127 aa)) are extracellular. A helical membrane pass occupies residues 128 to 148 (CLAVFSSNYNFTVTSIALFLM). Residues 149-168 (NQDPLYKDASDTVVGSSTVK) lie on the Cytoplasmic side of the membrane. Residues 169–189 (MLSYAGAIVGMCTMGYLGDLI) form a helical membrane-spanning segment. The Extracellular segment spans residues 190–192 (GRR). The helical transmembrane segment at 193 to 213 (LAMILTLALVFIGALLSSICA) threads the bilayer. Over 214–217 (WGDG) the chain is Cytoplasmic. A helical membrane pass occupies residues 218–238 (VTVLVIMGVCRFVLGVGSGGV). Over 239-263 (YPLSAVSAAEGAGSEKSNDRSMRVS) the chain is Extracellular. Residues 264–284 (WAYSMNVPGIMFPYIVALVLW) traverse the membrane as a helical segment. Topologically, residues 285–291 (CTTHNVD) are cytoplasmic. Residues 292–312 (VCFRILLGFGALPALLIWLPA) traverse the membrane as a helical segment. The Extracellular portion of the chain corresponds to 313–342 (WRMKEDRAYVAKDFAKHLAGVFVSRSYWRQ). The helical transmembrane segment at 343 to 363 (LLGTGVCWLLYDVTAYGILLV) threads the bilayer. Over 364-380 (QPEITQSIWGNSSSVTD) the chain is Cytoplasmic. A helical membrane pass occupies residues 381–401 (VIWQNIILNGMGIPGCFMGIL). The Extracellular segment spans residues 402–412 (VLKQMGVKWLQ). A helical transmembrane segment spans residues 413–433 (FWGFVGLAVSAFLMAATVEIL). The Cytoplasmic portion of the chain corresponds to 434–440 (QGKAWAQ). A helical membrane pass occupies residues 441–461 (LVLLCIVNFFINWGASITTFI). Residues 462–477 (LPSLVFPPEVRSTYSG) lie on the Extracellular side of the membrane. A helical transmembrane segment spans residues 478-498 (ISAALGKIGAVGGIYTMKAIL). Residues 499–504 (STGGLT) lie on the Cytoplasmic side of the membrane. Residues 505-525 (PMMICAGVPSLAAAILTWFYV) traverse the membrane as a helical segment. The Extracellular portion of the chain corresponds to 526-563 (DPVPNTLRSSFLQCFGSLAGSCPFIDCRKFRRGSRAFE).

The protein belongs to the major facilitator superfamily. Phosphate:H(+) symporter (TC 2.A.1.9) family.

Its subcellular location is the cell membrane. It carries out the reaction phosphate(in) = phosphate(out). Its function is as follows. Inorganic phosphate transporter. Activity is likely sodium-independent. Exhibits higher activity under acidic pH, implying that either the monovalent form of phosphate is the preferred substrate or the transport activity is H(+)-dependent. This Toxoplasma gondii (strain ATCC 50861 / VEG) protein is Inorganic phosphate transporter PT2.